A 147-amino-acid chain; its full sequence is Hemoglobin subunit gamma (147 aa).

Residues 3 to 147 (DFTAEEKAAI…VASAVARKYH (145 aa)) form the Globin domain. Heme b is bound by residues His-64 and His-93.

It belongs to the globin family. In terms of assembly, heterotetramer of two alpha chains and two gamma chains in fetal hemoglobin (Hb F). As to expression, red blood cells.

In terms of biological role, gamma chains make up the fetal hemoglobin F, in combination with alpha chains. The polypeptide is Hemoglobin subunit gamma (HBG) (Trichechus manatus (Caribbean manatee)).